Consider the following 314-residue polypeptide: 2,3-dihydroxyphenylpropionate/2,3-dihydroxicinnamic acid 1,2-dioxygenase (314 aa).

Histidine 115 serves as the catalytic Proton donor. The active-site Proton acceptor is the histidine 179.

The protein belongs to the LigB/MhpB extradiol dioxygenase family. Homotetramer. Fe(2+) serves as cofactor.

The catalysed reaction is 3-(2,3-dihydroxyphenyl)propanoate + O2 = (2Z,4E)-2-hydroxy-6-oxonona-2,4-dienedioate + H(+). It carries out the reaction (2E)-3-(2,3-dihydroxyphenyl)prop-2-enoate + O2 = (2Z,4E,7E)-2-hydroxy-6-oxonona-2,4,7-trienedioate + H(+). Its pathway is aromatic compound metabolism; 3-phenylpropanoate degradation. Catalyzes the non-heme iron(II)-dependent oxidative cleavage of 2,3-dihydroxyphenylpropionic acid and 2,3-dihydroxicinnamic acid into 2-hydroxy-6-ketononadienedioate and 2-hydroxy-6-ketononatrienedioate, respectively. The protein is 2,3-dihydroxyphenylpropionate/2,3-dihydroxicinnamic acid 1,2-dioxygenase of Klebsiella pneumoniae (strain 342).